The primary structure comprises 352 residues: Fatty acid synthase (352 aa).

One can recognise a Ketosynthase family 3 (KS3) domain in the interval 1–352 (MEDVVIAGIA…KVVLSLEHGL (352 aa)). Active-site for beta-ketoacyl synthase activity residues include C161, H293, and H331.

Homodimer which monomers are arranged in a head to tail fashion.

It carries out the reaction acetyl-CoA + n malonyl-CoA + 2n NADPH + 2n H(+) = a long-chain fatty acid + (n+1) CoA + n CO2 + 2n NADP(+).. Its function is as follows. Fatty acid synthetase catalyzes the formation of long-chain fatty acids from acetyl-CoA, malonyl-CoA and NADPH. This multifunctional protein has 7 catalytic activities as an acyl carrier protein. The chain is Fatty acid synthase (FASN) from Anser anser anser (Western greylag goose).